The chain runs to 268 residues: AN1-type zinc finger protein 1 (268 aa).

The residue at position 2 (A2) is an N-acetylalanine. 2 consecutive AN1-type zinc fingers follow at residues 4-52 (LDIG…VINE) and 58-106 (QHTS…IPKP). 16 residues coordinate Zn(2+): C10, C15, C25, C28, C33, H36, H42, C44, C64, C69, C79, C82, C87, H90, H96, and C98. A ubiquitin-like region spans residues 160 to 260 (QTERIYFQVF…EYLNDEEQFC (101 aa)).

Associates with the 26S proteasome; this association occurs upon exposure to arsenite and is reduced in the presence of ATP. Interacts (via AN1-type 1 and 2 zinc fingers) with PSMD1; this interaction is increased upon arsenite treatment and occurs in an ATP-independent manner. Interacts with PSMC4. Interacts with PSMA1. Interacts (via its ubiquitin-like region) with VCP; this interaction occurs in an arsenite-dependent manner and is necessary for the recruitment of the ubiquitin-selective ATPase VCP to stress granules (SGs).

It localises to the cytoplasm. It is found in the stress granule. Its function is as follows. Plays a role in the regulation of cytoplasmic stress granules (SGs) turnover. SGs are dynamic and transient cytoplasmic ribonucleoprotein assemblies important for cellular protein homeostasis when protein production is suspended after acute exogenous stress. Associates with SGs and is involved in the efficient and specific arsenite-induced clearance process of SGs through the recruitment of the ubiquitin-selective ATPase VCP and the 26S proteasome. This process requires both complexes for efficient degradation of damaged ubiquitinated SG proteins during recovery from arsenite stress, and hence avoiding aberrant cytoplasmic SGs degradation via autophagy. This is AN1-type zinc finger protein 1 from Homo sapiens (Human).